The primary structure comprises 86 residues: Large ribosomal subunit protein uL30m (86 aa).

The disordered stretch occupies residues 67–86 (QQRELRKSNPGFIVEKRTID).

This sequence belongs to the universal ribosomal protein uL30 family. In terms of assembly, component of the mitochondrial large ribosomal subunit (mt-LSU). Mature yeast 74S mitochondrial ribosomes consist of a small (37S) and a large (54S) subunit. The 37S small subunit contains a 15S ribosomal RNA (15S mt-rRNA) and 34 different proteins. The 54S large subunit contains a 21S rRNA (21S mt-rRNA) and 46 different proteins.

The protein resides in the mitochondrion. Its function is as follows. Component of the mitochondrial ribosome (mitoribosome), a dedicated translation machinery responsible for the synthesis of mitochondrial genome-encoded proteins, including at least some of the essential transmembrane subunits of the mitochondrial respiratory chain. The mitoribosomes are attached to the mitochondrial inner membrane and translation products are cotranslationally integrated into the membrane. In Saccharomyces cerevisiae (strain ATCC 204508 / S288c) (Baker's yeast), this protein is Large ribosomal subunit protein uL30m (MRPL33).